Reading from the N-terminus, the 315-residue chain is Methionyl-tRNA formyltransferase (315 aa).

113-116 is a (6S)-5,6,7,8-tetrahydrofolate binding site; the sequence is SLLP.

This sequence belongs to the Fmt family.

It carries out the reaction L-methionyl-tRNA(fMet) + (6R)-10-formyltetrahydrofolate = N-formyl-L-methionyl-tRNA(fMet) + (6S)-5,6,7,8-tetrahydrofolate + H(+). In terms of biological role, attaches a formyl group to the free amino group of methionyl-tRNA(fMet). The formyl group appears to play a dual role in the initiator identity of N-formylmethionyl-tRNA by promoting its recognition by IF2 and preventing the misappropriation of this tRNA by the elongation apparatus. In Photorhabdus laumondii subsp. laumondii (strain DSM 15139 / CIP 105565 / TT01) (Photorhabdus luminescens subsp. laumondii), this protein is Methionyl-tRNA formyltransferase.